The sequence spans 3256 residues: MWPTRRLVTIKRSGVDGPHFPLSLSTCLFGRGIECDIRIQLPVVSKQHCKIEIHEQEAILHNFSSTNPTQVNGSVIDEPVRLKHGDVITIIDRSFRYENESLQNGRKSTEFPRKIREQEPARRVSRSSFSSDPDEKAQDSKAYSKITEGKVSGNPQVHIKNVKEDSTADDSKDSVAQGTTNVHSSEHAGRNGRNAADPISGDFKEISSVKLVSRYGELKSVPTTQCLDNSKKNESPFWKLYESVKKELDVKSQKENVLQYCRKSGLQTDYATEKESADGLQGETQLLVSRKSRPKSGGSGHAVAEPASPEQELDQNKGKGRDVESVQTPSKAVGASFPLYEPAKMKTPVQYSQQQNSPQKHKNKDLYTTGRRESVNLGKSEGFKAGDKTLTPRKLSTRNRTPAKVEDAADSATKPENLSSKTRGSIPTDVEVLPTETEIHNEPFLTLWLTQVERKIQKDSLSKPEKLGTTAGQMCSGLPGLSSVDINNFGDSINESEGIPLKRRRVSFGGHLRPELFDENLPPNTPLKRGEAPTKRKSLVMHTPPVLKKIIKEQPQPSGKQESGSEIHVEVKAQSLVISPPAPSPRKTPVASDQRRRSCKTAPASSSKSQTEVPKRGGRKSGNLPSKRVSISRSQHDILQMICSKRRSGASEANLIVAKSWADVVKLGAKQTQTKVIKHGPQRSMNKRQRRPATPKKPVGEVHSQFSTGHANSPCTIIIGKAHTEKVHVPARPYRVLNNFISNQKMDFKEDLSGIAEMFKTPVKEQPQLTSTCHIAISNSENLLGKQFQGTDSGEEPLLPTSESFGGNVFFSAQNAAKQPSDKCSASPPLRRQCIRENGNVAKTPRNTYKMTSLETKTSDTETEPSKTVSTANRSGRSTEFRNIQKLPVESKSEETNTEIVECILKRGQKATLLQQRREGEMKEIERPFETYKENIELKENDEKMKAMKRSRTWGQKCAPMSDLTDLKSLPDTELMKDTARGQNLLQTQDHAKAPKSEKGKITKMPCQSLQPEPINTPTHTKQQLKASLGKVGVKEELLAVGKFTRTSGETTHTHREPAGDGKSIRTFKESPKQILDPAARVTGMKKWPRTPKEEAQSLEDLAGFKELFQTPGPSEESMTDEKTTKIACKSPPPESVDTPTSTKQWPKRSLRKADVEEEFLALRKLTPSAGKAMLTPKPAGGDEKDIKAFMGTPVQKLDLAGTLPGSKRQLQTPKEKAQALEDLAGFKELFQTPGHTEELVAAGKTTKIPCDSPQSDPVDTPTSTKQRPKRSIRKADVEGELLACRNLMPSAGKAMHTPKPSVGEEKDIIIFVGTPVQKLDLTENLTGSKRRPQTPKEEAQALEDLTGFKELFQTPGHTEEAVAAGKTTKMPCESSPPESADTPTSTRRQPKTPLEKRDVQKELSALKKLTQTSGETTHTDKVPGGEDKSINAFRETAKQKLDPAASVTGSKRHPKTKEKAQPLEDLAGLKELFQTPVCTDKPTTHEKTTKIACRSQPDPVDTPTSSKPQSKRSLRKVDVEEEFFALRKRTPSAGKAMHTPKPAVSGEKNIYAFMGTPVQKLDLTENLTGSKRRLQTPKEKAQALEDLAGFKELFQTRGHTEESMTNDKTAKVACKSSQPDPDKNPASSKRRLKTSLGKVGVKEELLAVGKLTQTSGETTHTHTEPTGDGKSMKAFMESPKQILDSAASLTGSKRQLRTPKGKSEVPEDLAGFIELFQTPSHTKESMTNEKTTKVSYRASQPDLVDTPTSSKPQPKRSLRKADTEEEFLAFRKQTPSAGKAMHTPKPAVGEEKDINTFLGTPVQKLDQPGNLPGSNRRLQTRKEKAQALEELTGFRELFQTPCTDNPTTDEKTTKKILCKSPQSDPADTPTNTKQRPKRSLKKADVEEEFLAFRKLTPSAGKAMHTPKAAVGEEKDINTFVGTPVEKLDLLGNLPGSKRRPQTPKEKAKALEDLAGFKELFQTPGHTEESMTDDKITEVSCKSPQPDPVKTPTSSKQRLKISLGKVGVKEEVLPVGKLTQTSGKTTQTHRETAGDGKSIKAFKESAKQMLDPANYGTGMERWPRTPKEEAQSLEDLAGFKELFQTPDHTEESTTDDKTTKIACKSPPPESMDTPTSTRRRPKTPLGKRDIVEELSALKQLTQTTHTDKVPGDEDKGINVFRETAKQKLDPAASVTGSKRQPRTPKGKAQPLEDLAGLKELFQTPICTDKPTTHEKTTKIACRSPQPDPVGTPTIFKPQSKRSLRKADVEEESLALRKRTPSVGKAMDTPKPAGGDEKDMKAFMGTPVQKLDLPGNLPGSKRWPQTPKEKAQALEDLAGFKELFQTPGTDKPTTDEKTTKIACKSPQPDPVDTPASTKQRPKRNLRKADVEEEFLALRKRTPSAGKAMDTPKPAVSDEKNINTFVETPVQKLDLLGNLPGSKRQPQTPKEKAEALEDLVGFKELFQTPGHTEESMTDDKITEVSCKSPQPESFKTSRSSKQRLKIPLVKVDMKEEPLAVSKLTRTSGETTQTHTEPTGDSKSIKAFKESPKQILDPAASVTGSRRQLRTRKEKARALEDLVDFKELFSAPGHTEESMTIDKNTKIPCKSPPPELTDTATSTKRCPKTRPRKEVKEELSAVERLTQTSGQSTHTHKEPASGDEGIKVLKQRAKKKPNPVEEEPSRRRPRAPKEKAQPLEDLAGFTELSETSGHTQESLTAGKATKIPCESPPLEVVDTTASTKRHLRTRVQKVQVKEEPSAVKFTQTSGETTDADKEPAGEDKGIKALKESAKQTPAPAASVTGSRRRPRAPRESAQAIEDLAGFKDPAAGHTEESMTDDKTTKIPCKSSPELEDTATSSKRRPRTRAQKVEVKEELLAVGKLTQTSGETTHTDKEPVGEGKGTKAFKQPAKRKLDAEDVIGSRRQPRAPKEKAQPLEDLASFQELSQTPGHTEELANGAADSFTSAPKQTPDSGKPLKISRRVLRAPKVEPVGDVVSTRDPVKSQSKSNTSLPPLPFKRGGGKDGSVTGTKRLRCMPAPEEIVEELPASKKQRVAPRARGKSSEPVVIMKRSLRTSAKRIEPAEELNSNDMKTNKEEHKLQDSVPENKGISLRSRRQNKTEAEQQITEVFVLAERIEINRNEKKPMKTSPEMDIQNPDDGARKPIPRDKVTENKRCLRSARQNESSQPKVAEESGGQKSAKVLMQNQKGKGEAGNSDSMCLRSRKTKSQPAASTLESKSVQRVTRSVKRCAENPKKAEDNVCVKKIRTRSHRDSEDI.

Positions 27-76 (CLFGRGIECDIRIQLPVVSKQHCKIEIHEQEAILHNFSSTNPTQVNGSVI) constitute an FHA domain. The disordered stretch occupies residues 101 to 199 (SLQNGRKSTE…RNGRNAADPI (99 aa)). The segment covering 107 to 122 (KSTEFPRKIREQEPAR) has biased composition (basic and acidic residues). Phosphoserine occurs at positions 125, 128, and 166. The span at 161 to 173 (NVKEDSTADDSKD) shows a compositional bias: basic and acidic residues. Polar residues predominate over residues 174-183 (SVAQGTTNVH). Residue lysine 245 forms a Glycyl lysine isopeptide (Lys-Gly) (interchain with G-Cter in SUMO2) linkage. Phosphoserine is present on residues serine 264, serine 296, and serine 308. 2 disordered regions span residues 271–426 (ATEK…RGSI) and 513–542 (RPELFDENLPPNTPLKRGEAPTKRKSLVMH). A compositionally biased stretch (basic and acidic residues) spans 314–324 (DQNKGKGRDVE). Threonine 328 and threonine 347 each carry phosphothreonine. The segment covering 349 to 358 (VQYSQQQNSP) has biased composition (polar residues). A phosphoserine mark is found at serine 352, serine 357, and serine 374. Threonine 401 carries the phosphothreonine modification. At serine 411 the chain carries Phosphoserine. A compositionally biased stretch (polar residues) spans 414–425 (KPENLSSKTRGS). Residues 495 to 678 (ESEGIPLKRR…AKQTQTKVIK (184 aa)) form a positively charged patch (CP) region. The region spanning 502–549 (KRRRVSFGGHLRPELFDENLPPNTPLKRGEAPTKRKSLVMHTPPVLKK) is the PP1-binding domain. Phosphoserine is present on serine 538. Threonine 543 bears the Phosphothreonine mark. The disordered stretch occupies residues 575-632 (SLVISPPAPSPRKTPVASDQRRRSCKTAPASSSKSQTEVPKRGGRKSGNLPSKRVSIS). Phosphoserine is present on residues serine 579 and serine 584. Polar residues predominate over residues 603 to 612 (PASSSKSQTE). Serine 648 bears the Phosphoserine mark. The tract at residues 674–707 (TKVIKHGPQRSMNKRQRRPATPKKPVGEVHSQFS) is disordered. Residues 676 to 694 (VIKHGPQRSMNKRQRRPAT) show a composition bias toward basic residues. Threonine 761 is modified (phosphothreonine). The interval 853-886 (SLETKTSDTETEPSKTVSTANRSGRSTEFRNIQK) is disordered. Residue serine 859 is modified to Phosphoserine. Over residues 866–882 (SKTVSTANRSGRSTEFR) the composition is skewed to polar residues. A 16 X 122 AA approximate repeats region spans residues 1000 to 2928 (GKITKMPCQS…ASFQELSQTP (1929 aa)). K167R repeat units follow at residues 1001 to 1112 (KITK…FQTP), 1123 to 1234 (KTTK…FQTP), 1245 to 1356 (KTTK…FQTP), 1367 to 1477 (KTTK…FQTP), 1488 to 1597 (KTTK…LFQT), and 1609 to 1720 (KTAK…FQTP). Threonine 1017 carries the post-translational modification Phosphothreonine. Glycyl lysine isopeptide (Lys-Gly) (interchain with G-Cter in SUMO2) cross-links involve residues lysine 1022 and lysine 1035. The interval 1045-1073 (TRTSGETTHTHREPAGDGKSIRTFKESPK) is disordered. Residues 1052 to 1072 (THTHREPAGDGKSIRTFKESP) show a composition bias toward basic and acidic residues. The residue at position 1071 (serine 1071) is a Phosphoserine. Residue threonine 1091 is modified to Phosphothreonine. Lysine 1093 participates in a covalent cross-link: Glycyl lysine isopeptide (Lys-Gly) (interchain with G-Cter in SUMO1); alternate. Lysine 1093 is covalently cross-linked (Glycyl lysine isopeptide (Lys-Gly) (interchain with G-Cter in SUMO2); alternate). Residue serine 1098 is modified to Phosphoserine. The interval 1109–1151 (FQTPGPSEESMTDEKTTKIACKSPPPESVDTPTSTKQWPKRSL) is disordered. A Phosphothreonine modification is found at threonine 1111. At serine 1131 the chain carries Phosphoserine. At threonine 1139 the chain carries Phosphothreonine. Serine 1142 carries the phosphoserine modification. Threonine 1167 carries the post-translational modification Phosphothreonine. Serine 1169 bears the Phosphoserine mark. Threonine 1176 carries the phosphothreonine modification. Residues lysine 1185 and lysine 1188 each participate in a glycyl lysine isopeptide (Lys-Gly) (interchain with G-Cter in SUMO2) cross-link. The residue at position 1193 (threonine 1193) is a Phosphothreonine. Serine 1207 is subject to Phosphoserine. Threonine 1233 carries the phosphothreonine modification. The disordered stretch occupies residues 1246–1276 (TTKIPCDSPQSDPVDTPTSTKQRPKRSIRKA). Residues serine 1253 and serine 1256 each carry the phosphoserine modification. The span at 1253 to 1266 (SPQSDPVDTPTSTK) shows a compositional bias: polar residues. Residues threonine 1261, threonine 1298, threonine 1315, and threonine 1327 each carry the phosphothreonine modification. A disordered region spans residues 1323 to 1518 (TENLTGSKRR…PQSKRSLRKV (196 aa)). A Phosphoserine modification is found at serine 1329. Phosphothreonine is present on threonine 1335. Lysine 1337 participates in a covalent cross-link: Glycyl lysine isopeptide (Lys-Gly) (interchain with G-Cter in SUMO2). Threonine 1355 is modified (phosphothreonine). Phosphoserine is present on serine 1376. Threonine 1383 is modified (phosphothreonine). A Phosphoserine modification is found at serine 1386. 2 stretches are compositionally biased toward basic and acidic residues: residues 1394–1406 (PLEKRDVQKELSA) and 1418–1442 (THTDKVPGGEDKSINAFRETAKQKL). Residues threonine 1420 and threonine 1437 each carry the phosphothreonine modification. Position 1496 is a phosphoserine (serine 1496). Threonine 1503 is modified (phosphothreonine). Serine 1506 is modified (phosphoserine). Threonine 1540 is subject to Phosphothreonine. Phosphotyrosine is present on tyrosine 1552. Threonine 1557 and threonine 1569 each carry phosphothreonine. 2 positions are modified to phosphoserine: serine 1571 and serine 1617. The interval 1597–1675 (TRGHTEESMT…PTGDGKSMKA (79 aa)) is disordered. At lysine 1639 the chain carries N6-acetyllysine. Lysine 1643 participates in a covalent cross-link: Glycyl lysine isopeptide (Lys-Gly) (interchain with G-Cter in SUMO2). Residues 1660-1672 (THTHTEPTGDGKS) show a composition bias toward basic and acidic residues. Residues serine 1679 and serine 1689 each carry the phosphoserine modification. Disordered stretches follow at residues 1689 to 1708 (SLTGSKRQLRTPKGKSEVPE), 1717 to 1765 (FQTP…ADTE), 1771 to 1790 (FRKQTPSAGKAMHTPKPAVG), 1801 to 1824 (TPVQKLDQPGNLPGSNRRLQTRKE), and 1839 to 1886 (FQTP…KADV). Residue lysine 1703 forms a Glycyl lysine isopeptide (Lys-Gly) (interchain with G-Cter in SUMO2) linkage. Threonine 1719 is subject to Phosphothreonine. Serine 1721 carries the post-translational modification Phosphoserine. Residues 1722-1733 (HTKESMTNEKTT) show a composition bias toward basic and acidic residues. K167R repeat units lie at residues 1731-1842 (KTTK…FQTP), 1854-1964 (TKKI…FQTP), 1975-2086 (KITE…FQTP), 2097-2204 (KTTK…FQTP), and 2215-2326 (KTTK…FQTP). Serine 1740 carries the phosphoserine modification. Phosphothreonine occurs at positions 1747, 1764, 1784, and 1801. Serine 1815 carries the phosphoserine modification. A Phosphothreonine modification is found at threonine 1841. Residues serine 1861 and serine 1864 each carry the phosphoserine modification. The segment covering 1861-1874 (SPQSDPADTPTNTK) has biased composition (polar residues). Residues threonine 1869, threonine 1897, threonine 1906, and threonine 1923 each carry the phosphothreonine modification. A Phosphoserine modification is found at serine 1937. Positions 1961 to 2002 (FQTPGHTEESMTDDKITEVSCKSPQPDPVKTPTSSKQRLKIS) are disordered. Threonine 1963 bears the Phosphothreonine mark. A compositionally biased stretch (basic and acidic residues) spans 1966–1977 (HTEESMTDDKIT). The residue at position 1983 (serine 1983) is a Phosphoserine. Lysine 2005 is subject to N6-acetyllysine. A Glycyl lysine isopeptide (Lys-Gly) (interchain with G-Cter in SUMO1); alternate cross-link involves residue lysine 2009. Residue lysine 2009 forms a Glycyl lysine isopeptide (Lys-Gly) (interchain with G-Cter in SUMO2); alternate linkage. The segment at 2017–2192 (KLTQTSGKTT…TPKGKAQPLE (176 aa)) is disordered. Phosphothreonine is present on residues threonine 2028 and threonine 2065. 2 stretches are compositionally biased toward basic and acidic residues: residues 2028 to 2046 (THRETAGDGKSIKAFKESA) and 2061 to 2070 (RWPRTPKEEA). A Glycyl lysine isopeptide (Lys-Gly) (interchain with G-Cter in SUMO1); alternate cross-link involves residue lysine 2067. Lysine 2067 is covalently cross-linked (Glycyl lysine isopeptide (Lys-Gly) (interchain with G-Cter in SUMO2); alternate). The residue at position 2072 (serine 2072) is a Phosphoserine. Threonine 2085 is subject to Phosphothreonine. Positions 2087–2099 (DHTEESTTDDKTT) are enriched in basic and acidic residues. A Phosphoserine modification is found at serine 2105. A Phosphothreonine modification is found at threonine 2113. Residues serine 2116 and serine 2135 each carry the phosphoserine modification. Residues 2145 to 2168 (HTDKVPGDEDKGINVFRETAKQKL) are compositionally biased toward basic and acidic residues. Threonine 2146, threonine 2163, and threonine 2203 each carry phosphothreonine. A disordered region spans residues 2205 to 2400 (ICTDKPTTHE…KPAVSDEKNI (196 aa)). Serine 2223 is modified (phosphoserine). A phosphothreonine mark is found at threonine 2231 and threonine 2233. Serine 2239 is subject to Phosphoserine. Threonine 2259 carries the phosphothreonine modification. Phosphoserine is present on serine 2261. A phosphothreonine mark is found at threonine 2268, threonine 2285, threonine 2325, threonine 2328, and threonine 2333. 5 K167R repeats span residues 2336-2447 (KTTK…FQTP), 2458-2569 (KITE…FSAP), 2580-2688 (KNTK…LSET), 2700-2805 (KATK…GFKD), and 2819-2928 (KTTK…SQTP). Serine 2344 is subject to Phosphoserine. Residues threonine 2352 and threonine 2389 each carry the phosphothreonine modification. Serine 2395 carries the post-translational modification Phosphoserine. Phosphothreonine is present on threonine 2406. Serine 2420 is subject to Phosphoserine. A phosphothreonine mark is found at threonine 2426 and threonine 2446. The tract at residues 2445–2480 (QTPGHTEESMTDDKITEVSCKSPQPESFKTSRSSKQ) is disordered. Over residues 2449–2460 (HTEESMTDDKIT) the composition is skewed to basic and acidic residues. Positions 2463–2475 (SCKSPQPESFKTS) are enriched in polar residues. Serine 2466 carries the post-translational modification Phosphoserine. A Glycyl lysine isopeptide (Lys-Gly) (interchain with G-Cter in SUMO1) cross-link involves residue lysine 2492. The interval 2497-2521 (AVSKLTRTSGETTQTHTEPTGDSKS) is disordered. The span at 2501-2514 (LTRTSGETTQTHTE) shows a compositional bias: polar residues. Serine 2505, serine 2528, and serine 2588 each carry phosphoserine. Residues 2570 to 3256 (GHTEESMTID…TRSHRDSEDI (687 aa)) form a disordered region. Basic and acidic residues-rich tracts occupy residues 2609–2618 (RKEVKEELSA), 2632–2644 (THKEPASGDEGIK), and 2660–2675 (EPSRRRPRAPKEKAQP). A Glycyl lysine isopeptide (Lys-Gly) (interchain with G-Cter in SUMO1); alternate cross-link involves residue lysine 2613. Lysine 2613 is covalently cross-linked (Glycyl lysine isopeptide (Lys-Gly) (interchain with G-Cter in SUMO2); alternate). Serine 2638 is modified (phosphoserine). A compositionally biased stretch (polar residues) spans 2685-2696 (LSETSGHTQESL). Residue serine 2708 is modified to Phosphoserine. A Glycyl lysine isopeptide (Lys-Gly) (interchain with G-Cter in SUMO1); alternate cross-link involves residue lysine 2734. Lysine 2734 participates in a covalent cross-link: Glycyl lysine isopeptide (Lys-Gly) (interchain with G-Cter in SUMO2); alternate. 2 stretches are compositionally biased toward basic and acidic residues: residues 2751 to 2770 (DADKEPAGEDKGIKALKESA) and 2810 to 2821 (HTEESMTDDKTT). 3 positions are modified to phosphoserine: serine 2827, serine 2828, and serine 2838. Lysine 2852 is covalently cross-linked (Glycyl lysine isopeptide (Lys-Gly) (interchain with G-Cter in SUMO1); alternate). Residue lysine 2852 forms a Glycyl lysine isopeptide (Lys-Gly) (interchain with G-Cter in SUMO2); alternate linkage. The segment covering 2869–2881 (THTDKEPVGEGKG) has biased composition (basic and acidic residues). The span at 2941–2951 (SFTSAPKQTPD) shows a compositional bias: polar residues. Lysine 2967 participates in a covalent cross-link: Glycyl lysine isopeptide (Lys-Gly) (interchain with G-Cter in SUMO2). Residues 2982 to 2991 (KSQSKSNTSL) are compositionally biased toward polar residues. Residue lysine 2986 is modified to N6-acetyllysine. Basic residues predominate over residues 3029 to 3039 (KKQRVAPRARG). Position 3034-3041 (3034-3041 (APRARGKS)) interacts with ATP. Serine 3041 is modified (phosphoserine). Basic and acidic residues-rich tracts occupy residues 3071–3080 (KTNKEEHKLQ) and 3113–3124 (ERIEINRNEKKP). Phosphoserine is present on serine 3128. The span at 3138–3154 (DGARKPIPRDKVTENKR) shows a compositional bias: basic and acidic residues. A compositionally biased stretch (polar residues) spans 3207–3223 (SQPAASTLESKSVQRVT). The segment covering 3228–3241 (RCAENPKKAEDNVC) has biased composition (basic and acidic residues).

In terms of assembly, interacts with KIF15. Interacts (via the FHA domain) with NIFK. Interacts with PPP1CC. Component of a complex at least composed of ZNF335, HCFC1, CCAR2, EMSY, MKI67, RBBP5, ASH2L and WDR5; the complex is formed as a result of interactions between components of a nuclear receptor-mediated transcription complex and a histone methylation complex. Interacts with ZNF335. In terms of processing, hyperphosphorylated by CDK1 in mitosis; hyperphosphorylatiom prevents undergoing liquid-liquid phase separation. Dephosphorylated by PPP1CC at the onset of anaphase. Dephosphorylated by protein phosphatase 2A (PP2A) at the onset of anaphase. Dephosphorylation by protein phosphatase 2A (PP2A) and simultaneous exposure of the positively charged patch (CP) during mitotic exit induce the RNA-dependent formation of a liquid-like condensed phase on the chromosome surface. Post-translationally, ubiquitinated by the APC/C complex after neuronal progenitors exit mitosis during brain development, leading to clearance from constitutive heterochromatin.

Its subcellular location is the chromosome. The protein resides in the nucleus. It localises to the nucleolus. Protein that associates with the surface of mitotic chromosomes and acts both as a chromosome repellent during early mitosis and chromosome attractant during late mitosis. Required to maintain individual mitotic chromosomes dispersed in the cytoplasm following nuclear envelope disassembly. During early mitosis, relocalizes from nucleoli to the chromosome surface where it forms extended brush structures that cover a substantial fraction of the chromosome surface. The MKI67 brush structure prevents chromosomes from collapsing into a single chromatin mass by forming a steric and electrostatic charge barrier: the protein has a high net electrical charge and acts as a surfactant, dispersing chromosomes and enabling independent chromosome motility. During mitotic anaphase, the MKI67 brush structure collapses and MKI67 switches from a chromosome repellent to a chromosome attractant to promote chromosome clustering and facilitate the exclusion of large cytoplasmic particles from the future nuclear space. Mechanistically, dephosphorylation during mitotic exit and simultaneous exposure of a conserved basic patch induce the RNA-dependent formation of a liquid-like condensed phase on the chromosome surface, promoting coalescence of neighboring chromosome surfaces and clustering of chromosomes. Binds premature ribosomal RNAs during anaphase; promoting liquid-liquid phase separation. Binds DNA, with a preference for supercoiled DNA and AT-rich DNA. Does not contribute to the internal structure of mitotic chromosomes. May play a role in chromatin organization; it is however unclear whether it plays a direct role in chromatin organization or whether it is an indirect consequence of its function in mitotic chromosome. The chain is Proliferation marker protein Ki-67 from Homo sapiens (Human).